The primary structure comprises 135 residues: Large ribosomal subunit protein bL19 (135 aa).

The protein belongs to the bacterial ribosomal protein bL19 family.

Functionally, this protein is located at the 30S-50S ribosomal subunit interface and may play a role in the structure and function of the aminoacyl-tRNA binding site. The protein is Large ribosomal subunit protein bL19 of Xanthomonas euvesicatoria pv. vesicatoria (strain 85-10) (Xanthomonas campestris pv. vesicatoria).